The chain runs to 70 residues: Cold shock-like protein CspA (70 aa).

A CSD domain is found at 7 to 67; the sequence is GTVKWFNEDK…GPKGLQASNV (61 aa).

It is found in the cytoplasm. The chain is Cold shock-like protein CspA (cspA) from Shewanella violacea (strain JCM 10179 / CIP 106290 / LMG 19151 / DSS12).